The sequence spans 269 residues: Interleukin-1 beta (269 aa).

A propeptide spanning residues 1–117 (MATVPELNCE…DDDDNLLVCD (117 aa)) is cleaved from the precursor.

This sequence belongs to the IL-1 family. As to quaternary structure, monomer. Interacts with MEFV. Interacts with integrins ITGAV:ITGBV and ITGA5:ITGB1; integrin-binding is required for IL1B signaling. Interacts with cargo receptor TMED10; the interaction is direct and is required for the secretion of IL1B mature form. Interacts with HSP90AB1; the interaction facilitates cargo translocation into the ERGIC. Interacts with HSP90B1; the interaction facilitates cargo translocation into the ERGIC. As to expression, expressed in activated macrophages (at protein level).

Its subcellular location is the cytoplasm. The protein localises to the cytosol. It is found in the secreted. It localises to the lysosome. The protein resides in the extracellular exosome. Potent pro-inflammatory cytokine. Initially discovered as the major endogenous pyrogen, induces prostaglandin synthesis, neutrophil influx and activation, T-cell activation and cytokine production, B-cell activation and antibody production, and fibroblast proliferation and collagen production. Promotes Th17 differentiation of T-cells. Synergizes with IL12/interleukin-12 to induce IFNG synthesis from T-helper 1 (Th1) cells. Plays a role in angiogenesis by inducing VEGF production synergistically with TNF and IL6. Involved in transduction of inflammation downstream of pyroptosis: its mature form is specifically released in the extracellular milieu by passing through the gasdermin-D (GSDMD) pore. This Mus musculus (Mouse) protein is Interleukin-1 beta (Il1b).